A 332-amino-acid chain; its full sequence is Methionyl-tRNA formyltransferase (332 aa).

Position 114–117 (Ser-114–Pro-117) interacts with (6S)-5,6,7,8-tetrahydrofolate.

The protein belongs to the Fmt family.

The catalysed reaction is L-methionyl-tRNA(fMet) + (6R)-10-formyltetrahydrofolate = N-formyl-L-methionyl-tRNA(fMet) + (6S)-5,6,7,8-tetrahydrofolate + H(+). Functionally, attaches a formyl group to the free amino group of methionyl-tRNA(fMet). The formyl group appears to play a dual role in the initiator identity of N-formylmethionyl-tRNA by promoting its recognition by IF2 and preventing the misappropriation of this tRNA by the elongation apparatus. The chain is Methionyl-tRNA formyltransferase from Corynebacterium aurimucosum (strain ATCC 700975 / DSM 44827 / CIP 107346 / CN-1) (Corynebacterium nigricans).